Here is a 268-residue protein sequence, read N- to C-terminus: Small ribosomal subunit protein uS2 (268 aa).

A disordered region spans residues 228-268; sequence QLDSEQDYEDFDESISDEYDDYEDEEEYEEQDLEVDASEDE. The segment covering 231-268 has biased composition (acidic residues); that stretch reads SEQDYEDFDESISDEYDDYEDEEEYEEQDLEVDASEDE.

Belongs to the universal ribosomal protein uS2 family.

This is Small ribosomal subunit protein uS2 from Rippkaea orientalis (strain PCC 8801 / RF-1) (Cyanothece sp. (strain PCC 8801)).